The primary structure comprises 35 residues: Photosystem II reaction center protein T (35 aa).

A helical transmembrane segment spans residues 3–23 (ALVYTFLLVGTLGIIFFAIFF).

Belongs to the PsbT family. As to quaternary structure, PSII is composed of 1 copy each of membrane proteins PsbA, PsbB, PsbC, PsbD, PsbE, PsbF, PsbH, PsbI, PsbJ, PsbK, PsbL, PsbM, PsbT, PsbY, PsbZ, Psb30/Ycf12, at least 3 peripheral proteins of the oxygen-evolving complex and a large number of cofactors. It forms dimeric complexes.

It localises to the plastid. It is found in the chloroplast thylakoid membrane. Its function is as follows. Found at the monomer-monomer interface of the photosystem II (PS II) dimer, plays a role in assembly and dimerization of PSII. PSII is a light-driven water plastoquinone oxidoreductase, using light energy to abstract electrons from H(2)O, generating a proton gradient subsequently used for ATP formation. The polypeptide is Photosystem II reaction center protein T (Marchantia polymorpha (Common liverwort)).